We begin with the raw amino-acid sequence, 511 residues long: Lysine--tRNA ligase (511 aa).

2 residues coordinate Mg(2+): E421 and E428.

The protein belongs to the class-II aminoacyl-tRNA synthetase family. As to quaternary structure, homodimer. Mg(2+) serves as cofactor.

It localises to the cytoplasm. The catalysed reaction is tRNA(Lys) + L-lysine + ATP = L-lysyl-tRNA(Lys) + AMP + diphosphate. This chain is Lysine--tRNA ligase, found in Herminiimonas arsenicoxydans.